The primary structure comprises 411 residues: Ornithine aminotransferase (411 aa).

K257 carries the post-translational modification N6-(pyridoxal phosphate)lysine.

The protein belongs to the class-III pyridoxal-phosphate-dependent aminotransferase family. OAT subfamily. It depends on pyridoxal 5'-phosphate as a cofactor.

It is found in the cytoplasm. The enzyme catalyses a 2-oxocarboxylate + L-ornithine = L-glutamate 5-semialdehyde + an L-alpha-amino acid. It participates in amino-acid biosynthesis; L-proline biosynthesis; L-glutamate 5-semialdehyde from L-ornithine: step 1/1. Catalyzes the interconversion of ornithine to glutamate semialdehyde. This Bordetella bronchiseptica (strain ATCC BAA-588 / NCTC 13252 / RB50) (Alcaligenes bronchisepticus) protein is Ornithine aminotransferase.